The chain runs to 602 residues: Elongation factor 4 (602 aa).

Residues 7–189 (RNIRNFSIIA…AIVQRIPAPQ (183 aa)) enclose the tr-type G domain. GTP contacts are provided by residues 19–24 (DHGKST) and 136–139 (NKID).

It belongs to the TRAFAC class translation factor GTPase superfamily. Classic translation factor GTPase family. LepA subfamily.

Its subcellular location is the cell inner membrane. It catalyses the reaction GTP + H2O = GDP + phosphate + H(+). Required for accurate and efficient protein synthesis under certain stress conditions. May act as a fidelity factor of the translation reaction, by catalyzing a one-codon backward translocation of tRNAs on improperly translocated ribosomes. Back-translocation proceeds from a post-translocation (POST) complex to a pre-translocation (PRE) complex, thus giving elongation factor G a second chance to translocate the tRNAs correctly. Binds to ribosomes in a GTP-dependent manner. The chain is Elongation factor 4 from Xylella fastidiosa (strain 9a5c).